A 278-amino-acid chain; its full sequence is 2-dehydro-3-deoxyphosphooctonate aldolase (278 aa).

It belongs to the KdsA family.

The protein resides in the cytoplasm. The catalysed reaction is D-arabinose 5-phosphate + phosphoenolpyruvate + H2O = 3-deoxy-alpha-D-manno-2-octulosonate-8-phosphate + phosphate. Its pathway is carbohydrate biosynthesis; 3-deoxy-D-manno-octulosonate biosynthesis; 3-deoxy-D-manno-octulosonate from D-ribulose 5-phosphate: step 2/3. It participates in bacterial outer membrane biogenesis; lipopolysaccharide biosynthesis. In Koribacter versatilis (strain Ellin345), this protein is 2-dehydro-3-deoxyphosphooctonate aldolase.